We begin with the raw amino-acid sequence, 69 residues long: Conotoxin Fr3.1 (69 aa).

Positions 1-20 (MLKTGVLLLIFLVLFPLATL) are cleaved as a signal peptide. Positions 21–51 (QDADQPVERNVENKQDLNLDKRRGMKLLAQR) are excised as a propeptide. Gln52 carries the post-translational modification Pyrrolidone carboxylic acid. Glu54 carries the post-translational modification 4-carboxyglutamate. 4-hydroxyproline is present on Pro58.

It belongs to the conotoxin M superfamily. Expressed by the venom duct.

Its subcellular location is the secreted. Probable toxin. This chain is Conotoxin Fr3.1, found in Conus frigidus (Frigid cone).